Consider the following 346-residue polypeptide: Putative [LysW]-L-2-aminoadipate/[LysW]-L-glutamate phosphate reductase (346 aa).

NADP(+) is bound at residue 12-15 (SGFT). Residue C147 is part of the active site. Positions 178-198 (GSSEGGAGGGDASSHPERSGV) are disordered. N310 contacts NADP(+).

The protein belongs to the NAGSA dehydrogenase family. Type 1 subfamily. LysY sub-subfamily.

The protein resides in the cytoplasm. The enzyme catalyses [amino-group carrier protein]-C-terminal-N-(1-carboxy-5-oxopentan-1-yl)-L-glutamine + phosphate + NADP(+) = [amino-group carrier protein]-C-terminal-N-(1-carboxy-5-phosphooxy-5-oxopentan-1-yl)-L-glutamine + NADPH + H(+). The catalysed reaction is [amino-group carrier protein]-C-terminal-gamma-(L-glutamyl-5-semialdehyde)-L-glutamate + phosphate + NADP(+) = [amino-group carrier protein]-C-terminal-gamma-(5-phospho-L-glutamyl)-L-glutamate + NADPH + H(+). It functions in the pathway amino-acid biosynthesis; L-lysine biosynthesis via AAA pathway; L-lysine from L-alpha-aminoadipate (Thermus route): step 3/5. The protein operates within amino-acid biosynthesis; L-arginine biosynthesis. In terms of biological role, involved in both the arginine and lysine biosynthetic pathways. This chain is Putative [LysW]-L-2-aminoadipate/[LysW]-L-glutamate phosphate reductase, found in Haloquadratum walsbyi (strain DSM 16790 / HBSQ001).